The chain runs to 204 residues: MAFNARSCCFASSNERVTCNCNCLKDQPVPRMKHSKDPFEAAMEEQEESPVETEQTLEGDERAVKKCKTSVVAEAKNKDEVEFTKNITGADPVTRANKMQKILSQFTEEQMSRYESFRRSGFKKSDMEKLVQRITGGPKMDDTMNIVVRGIAKMFVGDLVETARVVMRERKESGPIRPCHIRESYRRLKLQGKVPQRSVQRLFR.

Residues 38-60 (PFEAAMEEQEESPVETEQTLEGD) are disordered. Residues 42-58 (AMEEQEESPVETEQTLE) show a composition bias toward acidic residues. Residues 106–195 (FTEEQMSRYE…RRLKLQGKVP (90 aa)) enclose the Histone-fold domain.

It belongs to the TAF11 family. In terms of assembly, component of the TFIID complex. TFIID is composed of TATA binding protein (TBP) and a number of TBP-associated factors (TAFs) whose MWs range from 14-217 kDa. As to expression, expressed in roots, leaves and inflorescences.

The protein localises to the nucleus. TAFs are components of the transcription factor IID (TFIID) complex that is essential for mediating regulation of RNA polymerase transcription. The polypeptide is Transcription initiation factor TFIID subunit 11b (TAF11B) (Arabidopsis thaliana (Mouse-ear cress)).